We begin with the raw amino-acid sequence, 185 residues long: Acireductone dioxygenase (185 aa).

Fe(2+) contacts are provided by His-101, His-103, Glu-107, and His-145. Ni(2+) contacts are provided by His-101, His-103, Glu-107, and His-145.

This sequence belongs to the acireductone dioxygenase (ARD) family. In terms of assembly, monomer. The cofactor is Fe(2+). Ni(2+) serves as cofactor.

It catalyses the reaction 1,2-dihydroxy-5-(methylsulfanyl)pent-1-en-3-one + O2 = 3-(methylsulfanyl)propanoate + CO + formate + 2 H(+). The enzyme catalyses 1,2-dihydroxy-5-(methylsulfanyl)pent-1-en-3-one + O2 = 4-methylsulfanyl-2-oxobutanoate + formate + 2 H(+). The protein operates within amino-acid biosynthesis; L-methionine biosynthesis via salvage pathway; L-methionine from S-methyl-5-thio-alpha-D-ribose 1-phosphate: step 5/6. Catalyzes 2 different reactions between oxygen and the acireductone 1,2-dihydroxy-3-keto-5-methylthiopentene (DHK-MTPene) depending upon the metal bound in the active site. Fe-containing acireductone dioxygenase (Fe-ARD) produces formate and 2-keto-4-methylthiobutyrate (KMTB), the alpha-ketoacid precursor of methionine in the methionine recycle pathway. Ni-containing acireductone dioxygenase (Ni-ARD) produces methylthiopropionate, carbon monoxide and formate, and does not lie on the methionine recycle pathway. This chain is Acireductone dioxygenase, found in Synechococcus sp. (strain RCC307).